Here is a 418-residue protein sequence, read N- to C-terminus: Translation initiation factor 2 subunit gamma (418 aa).

A tr-type G domain is found at 7 to 206; that stretch reads QPEVNIGVVG…GIQKYIPTPQ (200 aa). The interval 16–23 is G1; that stretch reads GHVDHGKT. Positions 19, 23, 44, and 46 each coordinate Mg(2+). 19–24 contributes to the GTP binding site; sequence DHGKTT. The interval 44 to 48 is G2; the sequence is GMTIK. Residues Cys59, Cys62, Cys74, and Cys77 each contribute to the Zn(2+) site. The tract at residues 93–96 is G3; it reads DAPG. GTP is bound by residues 149-152 and 184-186; these read NKVD and SAL. The tract at residues 149-152 is G4; the sequence is NKVD. A G5 region spans residues 184–186; that stretch reads SAL.

This sequence belongs to the TRAFAC class translation factor GTPase superfamily. Classic translation factor GTPase family. EIF2G subfamily. In terms of assembly, heterotrimer composed of an alpha, a beta and a gamma chain. It depends on Mg(2+) as a cofactor.

The catalysed reaction is GTP + H2O = GDP + phosphate + H(+). In terms of biological role, eIF-2 functions in the early steps of protein synthesis by forming a ternary complex with GTP and initiator tRNA. This chain is Translation initiation factor 2 subunit gamma, found in Sulfurisphaera tokodaii (strain DSM 16993 / JCM 10545 / NBRC 100140 / 7) (Sulfolobus tokodaii).